Consider the following 714-residue polypeptide: Penicillin-binding protein 1F (714 aa).

The Cytoplasmic segment spans residues 1 to 12 (MFKIKKKKLFIP). The helical; Signal-anchor for type II membrane protein transmembrane segment at 13–33 (IIILVLTAFLALIGYISIIFL) threads the bilayer. Over 34 to 714 (GHYVIDEKKL…DYVQPKLFSS (681 aa)) the chain is Extracellular. The tract at residues 49 to 217 (SKIVDQNGDE…STYSPILHPD (169 aa)) is transglycosylase. The active-site Proton donor; for transglycosylase activity is E87. Residues 297-592 (SKLQKTAYQV…SSYPTRLFKD (296 aa)) are transpeptidase. S359 serves as the catalytic Acyl-ester intermediate; for transpeptidase activity.

It in the N-terminal section; belongs to the glycosyltransferase 51 family. In the C-terminal section; belongs to the transpeptidase family.

The protein resides in the cell membrane. It carries out the reaction [GlcNAc-(1-&gt;4)-Mur2Ac(oyl-L-Ala-gamma-D-Glu-L-Lys-D-Ala-D-Ala)](n)-di-trans,octa-cis-undecaprenyl diphosphate + beta-D-GlcNAc-(1-&gt;4)-Mur2Ac(oyl-L-Ala-gamma-D-Glu-L-Lys-D-Ala-D-Ala)-di-trans,octa-cis-undecaprenyl diphosphate = [GlcNAc-(1-&gt;4)-Mur2Ac(oyl-L-Ala-gamma-D-Glu-L-Lys-D-Ala-D-Ala)](n+1)-di-trans,octa-cis-undecaprenyl diphosphate + di-trans,octa-cis-undecaprenyl diphosphate + H(+). It catalyses the reaction Preferential cleavage: (Ac)2-L-Lys-D-Ala-|-D-Ala. Also transpeptidation of peptidyl-alanyl moieties that are N-acyl substituents of D-alanine.. Its pathway is cell wall biogenesis; peptidoglycan biosynthesis. Cell wall formation. May be involved in outgrowth of the germinated spore or it could function in the synthesis of the germ cell wall. In Bacillus subtilis (strain 168), this protein is Penicillin-binding protein 1F (pbpF).